A 72-amino-acid polypeptide reads, in one-letter code: Mitochondrial import protein 2 (72 aa).

Residues 1–22 (MAEVLDLEIDPISDGEDDTYSS) form a disordered region. Over 1 to 34 (MAEVLDLEIDPISDGEDDTYSSELDDDLKDSIEQ) the chain is Cytoplasmic. A helical membrane pass occupies residues 35–52 (LERVLCLVVFPLLGKFLG). Residues 53–72 (RKFAFHAWARWLERRRLVSN) lie on the Mitochondrial intermembrane side of the membrane.

This sequence belongs to the MIM2 family. In terms of assembly, component of the mitochondrial outer import machinery (MIM) complex containing at least mim1 and mim2. Interacts with mim1. Interacts with mitophagy receptor atg43.

The protein resides in the mitochondrion outer membrane. Functionally, component of the mitochondrial outer import machinery (MIM) complex that mediates transport of proteins into mitochondrial compartments. Promotes the insertion of tom70 into the outer mitochondrial membrane. Promotes the insertion of atg43 into the outer mitochondrial membrane. Involved in import of the subset of proteins with multiple alpha-helical transmembrane segments. This Schizosaccharomyces pombe (strain 972 / ATCC 24843) (Fission yeast) protein is Mitochondrial import protein 2.